A 922-amino-acid chain; its full sequence is Centrosomal protein of 104 kDa (922 aa).

Positions 210-277 (EVAQIIRRLD…DLAKEKKQQM (68 aa)) form a coiled coil. The span at 307-318 (PLQPLASPSSPQ) shows a compositional bias: low complexity. Disordered regions lie at residues 307–333 (PLQPLASPSSPQHWKAVSSLPRTEELA) and 348–419 (LASS…PLTE). Basic and acidic residues predominate over residues 396–407 (PEVREADSDVRR). HEAT repeat units lie at residues 526–564 (AIPLLLARTGDSSARLRVMALNFIQEMALFKEVRSLQLI) and 601–637 (GFTVDNVMKFAVSALEHRVYEVRETAVRIILDMYRQH). Composition is skewed to basic and acidic residues over residues 673-697 (TEAEGKTQKRVVTKEAEKQKKEETK) and 714-725 (QEKENEAVKLKN). 2 disordered regions span residues 673 to 741 (TEAE…TPEI) and 880 to 922 (PAPQ…HTRR). Positions 678-705 (KTQKRVVTKEAEKQKKEETKALQGLSAA) form a coiled coil.

Interacts with CCP110 and CEP97. Interacts with ARMC9, TOGARAM1, CCDC66 and CSPP1. Expressed predominantly in the brain. Also detected, although at much lower levels, in the heart and the liver. Within the brain, expressed in the cerebral cortex, hippocampus, cerebellum and brainstem.

It is found in the cell projection. The protein resides in the cilium. Its subcellular location is the cytoplasm. The protein localises to the cytoskeleton. It localises to the microtubule organizing center. It is found in the centrosome. The protein resides in the centriole. Its subcellular location is the spindle pole. Required for ciliogenesis and for structural integrity at the ciliary tip. The protein is Centrosomal protein of 104 kDa (Cep104) of Rattus norvegicus (Rat).